Consider the following 695-residue polypeptide: G-patch and R3H domain-containing protein C30B4.02c (695 aa).

Disordered stretches follow at residues 168-200, 213-242, 257-317, 332-351, 388-448, and 475-517; these read SDKE…NDDS, DIAN…EFDI, FADL…FDEG, GNTD…DEDE, DSED…VAAR, and DKSK…DSDN. Basic and acidic residues predominate over residues 182–198; sequence CYKEQESEKELYSKDND. Composition is skewed to acidic residues over residues 262–286, 307–317, and 337–351; these read VLEE…EEEE, EDSESLEFDEG, and LAED…DEDE. The span at 421-434 shows a compositional bias: basic residues; the sequence is KKDRKLPKKMRKAQ. Positions 525–587 constitute an R3H domain; the sequence is KIFINDVYQR…KRYTMLSKTH (63 aa). In terms of domain architecture, G-patch spans 652-695; that stretch reads KENPGRRLLEKLGWYAGKGLGHPENEGSKDSLRAIVKVSRSGLG.

It localises to the cytoplasm. The sequence is that of G-patch and R3H domain-containing protein C30B4.02c from Schizosaccharomyces pombe (strain 972 / ATCC 24843) (Fission yeast).